The following is a 178-amino-acid chain: ATP-dependent protease subunit HslV (178 aa).

Threonine 7 is a catalytic residue. Na(+) contacts are provided by glycine 162, cysteine 165, and threonine 168.

This sequence belongs to the peptidase T1B family. HslV subfamily. In terms of assembly, a double ring-shaped homohexamer of HslV is capped on each side by a ring-shaped HslU homohexamer. The assembly of the HslU/HslV complex is dependent on binding of ATP.

It localises to the cytoplasm. The enzyme catalyses ATP-dependent cleavage of peptide bonds with broad specificity.. Allosterically activated by HslU binding. Its function is as follows. Protease subunit of a proteasome-like degradation complex believed to be a general protein degrading machinery. This Leptothrix cholodnii (strain ATCC 51168 / LMG 8142 / SP-6) (Leptothrix discophora (strain SP-6)) protein is ATP-dependent protease subunit HslV.